The chain runs to 350 residues: Glyceraldehyde-3-phosphate dehydrogenase (350 aa).

Residues 10-11 (RI), aspartate 36, arginine 82, and serine 125 each bind NAD(+). D-glyceraldehyde 3-phosphate is bound by residues 161-163 (SCT), threonine 193, 222-223 (TG), and arginine 245. The active-site Nucleophile is cysteine 162. Asparagine 331 is a binding site for NAD(+).

This sequence belongs to the glyceraldehyde-3-phosphate dehydrogenase family. As to quaternary structure, homotetramer.

The protein resides in the cytoplasm. It catalyses the reaction D-glyceraldehyde 3-phosphate + phosphate + NAD(+) = (2R)-3-phospho-glyceroyl phosphate + NADH + H(+). It functions in the pathway carbohydrate degradation; glycolysis; pyruvate from D-glyceraldehyde 3-phosphate: step 1/5. Functionally, catalyzes the oxidative phosphorylation of glyceraldehyde 3-phosphate (G3P) to 1,3-bisphosphoglycerate (BPG) using the cofactor NAD. The first reaction step involves the formation of a hemiacetal intermediate between G3P and a cysteine residue, and this hemiacetal intermediate is then oxidized to a thioester, with concomitant reduction of NAD to NADH. The reduced NADH is then exchanged with the second NAD, and the thioester is attacked by a nucleophilic inorganic phosphate to produce BPG. The chain is Glyceraldehyde-3-phosphate dehydrogenase (gap) from Treponema pallidum (strain Nichols).